We begin with the raw amino-acid sequence, 229 residues long: Acetate kinase EutQ (229 aa).

Positions 1–100 (MKKLITANDI…EKVLKEKQSL (100 aa)) are required for interaction with EutM.

This sequence belongs to the EutQ cupin-like family. As to quaternary structure, homodimer. Interacts with the N-terminus of EutM; a probably cytoplasm-facing helix (EutM 'Val-49' to 'Gln-64') interacts with N-terminus of EutQ. Requires Does not need divalent cations. as cofactor.

It localises to the bacterial microcompartment. It catalyses the reaction acetate + ATP = acetyl phosphate + ADP. The protein operates within amine and polyamine degradation; ethanolamine degradation. Functionally, a bidirectional acetate kinase that may drive flux through the ethanolamine (EA) degradation pathway under anoxic conditions found when this bacteria infects the host intestine. It may generate ATP that can be used by other enzymes (EutA and EutT) in the eut pathway. Can use GTP instead of ATP with reduced efficiency. Might be required to correctly target EutE to bacterial microcompartments (BMC). Required for the biogenesis of multiple mobile BMCs per cell. Might serve as an assembly hub for BMC shell proteins. Expression of eutK, eutL, eutM, eutN, eutS (eutSMNLK) in E.coli leads to formation of a single BMC; coexpression of eutQ with eutSMNLK permits E.coli to make cells with more than one mobile BMC, as is usual in vivo. EutS alone also forms BMCs, but in the presence of eutQ both BMCs and protein filaments are formed. Expression of the eut operon allows this bacteria to use ethanolamine (EA) as a carbon, nitrogen and energy source. It relies on cobalamin (vitamin B12) both as a cofactor for the ethanolamine ammonia-lyase (EAL) activity and to induce the operon. EA enhances bacterial survival in macrophages in a concentration-dependent manner, suggesting it is an important nutrient during infection. This chain is Acetate kinase EutQ (eutQ), found in Salmonella typhimurium (strain LT2 / SGSC1412 / ATCC 700720).